A 253-amino-acid chain; its full sequence is Transcription factor ORG2 (253 aa).

Residues 71-123 (VKKLNHNASERDRRKKINTLFSSLRSCLPASDQSKKLSIPETVSKSLKYIPEL) form the bHLH domain.

In terms of assembly, homodimer. Roots.

It localises to the nucleus. In Arabidopsis thaliana (Mouse-ear cress), this protein is Transcription factor ORG2 (ORG2).